Reading from the N-terminus, the 195-residue chain is Peptidyl-tRNA hydrolase (195 aa).

Tyrosine 18 lines the tRNA pocket. Histidine 23 serves as the catalytic Proton acceptor. The tRNA site is built by tyrosine 69, asparagine 71, and asparagine 117.

This sequence belongs to the PTH family. In terms of assembly, monomer.

The protein localises to the cytoplasm. It carries out the reaction an N-acyl-L-alpha-aminoacyl-tRNA + H2O = an N-acyl-L-amino acid + a tRNA + H(+). Its function is as follows. Hydrolyzes ribosome-free peptidyl-tRNAs (with 1 or more amino acids incorporated), which drop off the ribosome during protein synthesis, or as a result of ribosome stalling. Catalyzes the release of premature peptidyl moieties from peptidyl-tRNA molecules trapped in stalled 50S ribosomal subunits, and thus maintains levels of free tRNAs and 50S ribosomes. In Nitrosomonas europaea (strain ATCC 19718 / CIP 103999 / KCTC 2705 / NBRC 14298), this protein is Peptidyl-tRNA hydrolase.